A 486-amino-acid chain; its full sequence is Homoserine O-acetyltransferase (486 aa).

One can recognise an AB hydrolase-1 domain in the interval 66–436 (NVLVICHALT…PEGHDAFLLE (371 aa)). The active site involves Ser-162. Ser-162 acts as the Nucleophile in catalysis. Residues 248–274 (KFSRRSPSIAQQQKAQKAEVRKPSTVS) form a disordered region. Positions 250–262 (SRRSPSIAQQQKA) are enriched in polar residues. Residues Asp-401 and His-430 contribute to the active site.

This sequence belongs to the AB hydrolase superfamily. MetX family.

It carries out the reaction L-homoserine + acetyl-CoA = O-acetyl-L-homoserine + CoA. The protein operates within amino-acid biosynthesis; L-methionine biosynthesis via de novo pathway; O-acetyl-L-homoserine from L-homoserine: step 1/1. Commits homoserine to the methionine biosynthesis pathway by catalyzing its O-acetylation. The polypeptide is Homoserine O-acetyltransferase (MET2) (Saccharomyces pastorianus (Lager yeast)).